Consider the following 358-residue polypeptide: MAQVELKQVRKTYPNGAEAIFGVDMKIDDGELIVFVGPSGCGKSTLLRMVAGLESISSGEILIGDRVINDVSPSERDVAMVFQNYALYPHMSVRGNMSYGLKNRKMDKEEIERRITDAATMLKIDQFLDRQPNQLSGGQRQRVAMGRAIVRHPQVFLFDEPLSNLDAKLRVQMRIEIKKLQRRMNVTSIYVTHDQTEAMTLADRLAVINEGQIEQMGAPMELYSNPATLFVASFIGAPQINLIPVAFDGSAIVNGDLRIGGFSDLPMGVDLKLGVRPDVMTIDPEGQVMMNVDIVEQHGGENLIYGTIDGVFSGEGEPQEVCLKGSQTLLPNPDDKLRLRFDPDAAFIFRTDTGERLK.

The 232-residue stretch at 4-235 folds into the ABC transporter domain; that stretch reads VELKQVRKTY…PATLFVASFI (232 aa). Residue 37–44 participates in ATP binding; the sequence is GPSGCGKS.

It belongs to the ABC transporter superfamily. sn-glycerol-3-phosphate importer (TC 3.A.1.1.3) family. The complex is composed of two ATP-binding proteins (UgpC), two transmembrane proteins (UgpA and UgpE) and a solute-binding protein (UgpB).

It is found in the cell inner membrane. The enzyme catalyses sn-glycerol 3-phosphate(out) + ATP + H2O = sn-glycerol 3-phosphate(in) + ADP + phosphate + H(+). Part of the ABC transporter complex UgpBAEC involved in sn-glycerol-3-phosphate (G3P) import. Responsible for energy coupling to the transport system. This is sn-glycerol-3-phosphate import ATP-binding protein UgpC from Roseobacter denitrificans (strain ATCC 33942 / OCh 114) (Erythrobacter sp. (strain OCh 114)).